We begin with the raw amino-acid sequence, 881 residues long: Probable alpha/beta-glucosidase agdC (881 aa).

A signal peptide spans 1-14; sequence MLRSLLLLAPLVGA. N-linked (GlcNAc...) asparagine glycans are attached at residues N171, N293, and N373. D422 (nucleophile) is an active-site residue. E425 is a catalytic residue. Positions 440–485 are disordered; sequence YARDNDLPPAAPPVRPSNPRPLPGFPGDFQPSSSSKRSTKGSKVGL. The segment covering 448 to 463 has biased composition (pro residues); sequence PAAPPVRPSNPRPLPG. N-linked (GlcNAc...) asparagine glycosylation is present at N506. Residue D571 is the Proton donor of the active site. Residues N572, N608, and N742 are each glycosylated (N-linked (GlcNAc...) asparagine).

This sequence belongs to the glycosyl hydrolase 31 family.

The protein localises to the secreted. It carries out the reaction Hydrolysis of terminal, non-reducing (1-&gt;4)-linked alpha-D-glucose residues with release of alpha-D-glucose.. The enzyme catalyses Hydrolysis of terminal, non-reducing beta-D-glucosyl residues with release of beta-D-glucose.. Functionally, glucosidase involved in the degradation of cellulosic biomass. Has both alpha- and beta-glucosidase activity. The polypeptide is Probable alpha/beta-glucosidase agdC (agdC) (Aspergillus fumigatus (strain CBS 144.89 / FGSC A1163 / CEA10) (Neosartorya fumigata)).